Reading from the N-terminus, the 546-residue chain is MAAKDIRFGEDARTRMVRGVNVLANAVKATLGPKGRNVVLEKSFGAPTITKDGVSVAKEIELADKFENMGAQMVKEVASKTNDNAGDGTTTATVLAQALIREGAKAVAAGMNPMDLKRGIDQAVKAAVVELKNISKPTTDDKAIAQVGTISANSDESIGNIIAEAMQKVGKEGVITVEEGSGLENELDVVEGMQFDRGYLSPYFINNQQSQSADLDDPFILLHDKKISNVRDLLPVLEGVAKAGKPLLIVAEEVEGEALATLVVNTIRGIVKVVAVKAPGFGDRRKAMLEDMAVLTGGTVISEEVGLALEKATIKDLGRAKKVQVSKENTTIIDGAGDTAAIESRVGQIKTQIEDTSSDYDREKLQERVAKLAGGVAVIKVGASTEIEMKEKKARVEDALHATRAAVEEGVVPGGGVALVRALVAVGELKGANEDQTHGIQIALRAMEAPLREIVANAGEEPSVILNKVKEGSGNYGYNAANGEFGDMVQFGILDPTKVTRSALQNAASIAGLMITTEAMVADAPKKDEPVMPAGGGMGGMGGMDF.

ATP contacts are provided by residues 30–33 (TLGP), Lys51, 87–91 (DGTTT), Gly415, 479–481 (NAA), and Asp495.

The protein belongs to the chaperonin (HSP60) family. In terms of assembly, forms a cylinder of 14 subunits composed of two heptameric rings stacked back-to-back. Interacts with the co-chaperonin GroES.

It is found in the cytoplasm. It carries out the reaction ATP + H2O + a folded polypeptide = ADP + phosphate + an unfolded polypeptide.. Its function is as follows. Together with its co-chaperonin GroES, plays an essential role in assisting protein folding. The GroEL-GroES system forms a nano-cage that allows encapsulation of the non-native substrate proteins and provides a physical environment optimized to promote and accelerate protein folding. The polypeptide is Chaperonin GroEL (Xanthomonas campestris pv. phaseoli).